The sequence spans 618 residues: Transport protein particle subunit trs85-2 (618 aa).

The protein belongs to the TRS85 family. Part of the multisubunit TRAPP (transport protein particle) complexes I and II.

Its subcellular location is the golgi apparatus. It is found in the cis-Golgi network. In terms of biological role, component of the TRAPP I and TRAPP II complexes. TRAPP I plays a key role in the late stages of endoplasmic reticulum to Golgi traffic. TRAPP II seems to play a role in intra-Golgi transport. Has a role late in meiosis following DNA replication. In Schizosaccharomyces pombe (strain 972 / ATCC 24843) (Fission yeast), this protein is Transport protein particle subunit trs85-2 (trs85-2).